Consider the following 399-residue polypeptide: S-adenosylmethionine synthase (399 aa).

Histidine 17 serves as a coordination point for ATP. A Mg(2+)-binding site is contributed by aspartate 19. Glutamate 45 lines the K(+) pocket. Residues glutamate 58 and glutamine 101 each contribute to the L-methionine site. The tract at residues 101–111 (QSPDIAQGVDE) is flexible loop. ATP is bound by residues 177–179 (DAK), 244–245 (RF), aspartate 253, 259–260 (RK), alanine 276, and lysine 280. Aspartate 253 provides a ligand contact to L-methionine. Lysine 284 serves as a coordination point for L-methionine.

It belongs to the AdoMet synthase family. Homotetramer; dimer of dimers. It depends on Mg(2+) as a cofactor. Requires K(+) as cofactor.

The protein localises to the cytoplasm. It carries out the reaction L-methionine + ATP + H2O = S-adenosyl-L-methionine + phosphate + diphosphate. Its pathway is amino-acid biosynthesis; S-adenosyl-L-methionine biosynthesis; S-adenosyl-L-methionine from L-methionine: step 1/1. Catalyzes the formation of S-adenosylmethionine (AdoMet) from methionine and ATP. The overall synthetic reaction is composed of two sequential steps, AdoMet formation and the subsequent tripolyphosphate hydrolysis which occurs prior to release of AdoMet from the enzyme. The sequence is that of S-adenosylmethionine synthase from Listeria welshimeri serovar 6b (strain ATCC 35897 / DSM 20650 / CCUG 15529 / CIP 8149 / NCTC 11857 / SLCC 5334 / V8).